A 1083-amino-acid polypeptide reads, in one-letter code: MDKSSKPTIRLLFATKGCAISHSLLLLTGQISTEPLYVVSYTWTPDLDDVFVKNGREEITQVIPTKRPREVTENDEENQIMHLFCSRDVNVIFYLIGGFSTGDVRSRVWPIFFCCFKTQTDFKALYKALWYGAPLNPHIISDTLCISETFDIHSEVIQTLMVTTHHLNRKGLSDNGLCITEATLCKLVKKSVGRQELTSLYAHYERQVLAAYRRLYWGYGCSPFWYIVRFGPSEKTLVLATRYYLLQTDTSYNTLETPLYDLQAIKDLFLTYQVPALPNCSGYNISDLLSFDKLSMFCCSSTYTRGLTAKNALSYILQRIHTDTTEIHAVSEYITNDRKGLKVPDREFVDYIYLAHFECFNRKQIADHLQAVTYSDFVNKPVLLKSSNLGKRATANFFNHVRSRLNMRDYIKKNVICDVTELGPEIGHKYTITKTYTLSLTYAAKPSKFIGVCDLATTLTRRVENIEKQFSPYGWSSTIPSNPPGFDELSNFEDSGVSAEALRAANFANDTPNQSGRTGFDTSPGITKLLLFFSAATGIATHDVSILSYKTPLEALIGHSEVTGPMPVYRVALPHGAQAFAVIANDTWSSITNRYTLPHEARLIAEDLKQINPCNFVAASLRDMQLTLLLSTSVKNVSKISSNIPKDQLYINRNELFNTNLIITNLILDVDFHIRKPIPLGILHAGMRAFRHGILTAMQLLFPKAVVNPNKDPCYFYKTACPEPTVEVLDDDNLLDITSHSDIDFYIENGELYTCVEENYTEDVWFFDTQTTSEVHTHADVSNNENLHETLPCNCKEKIGFRVCVPIPNPYALVGSSTLKGFAQILQQAVLLEREFVEYIGPYLRDFSFIDTGVYSHGHSLRLPFFSKVTTTGTAVGQLLPFYVVPEQCIDILAFVTSHRNPANFHFHSRPQSNVPVQFILHNLGGEYAEFFERKVARNKQIFSSPQISLTKALKERGVTCLDAFTLEAFVDSTILESIVEHIAVHFPGRDREYTLTSSKCIAIKRDWVLFQLICGTKGFTCLRYPHRGGRTAPRTFVSLRVDHHNRLCISLAQQCFATKCDSNRMHTIFTLEVPNYPNLTSS.

A CHC2-type zinc finger spans residues 1022–1061 (CLRYPHRGGRTAPRTFVSLRVDHHNRLCISLAQQCFATKC).

Belongs to the herpesviridae DNA primase family. As to quaternary structure, associates with the helicase and the primase-associated factor to form the helicase-primase factor.

It localises to the host nucleus. Functionally, essential component of the helicase/primase complex. Unwinds the DNA at the replication forks and generates single-stranded DNA for both leading and lagging strand synthesis. The primase initiates primer synthesis and thereby produces large amount of short RNA primers on the lagging strand that the polymerase elongates using dNTPs. This Homo sapiens (Human) protein is DNA primase.